The chain runs to 403 residues: S-adenosylmethionine synthase (403 aa).

Position 15 (His-15) interacts with ATP. Residue Asp-17 coordinates Mg(2+). Residue Glu-43 participates in K(+) binding. 2 residues coordinate L-methionine: Glu-56 and Gln-99. The segment at 99-109 (QSPDINQGVDR) is flexible loop. Residues 166–168 (DAK), 232–233 (KF), Asp-241, 247–248 (RK), Ala-264, and Lys-268 contribute to the ATP site. Position 241 (Asp-241) interacts with L-methionine. Lys-272 serves as a coordination point for L-methionine.

This sequence belongs to the AdoMet synthase family. Homotetramer; dimer of dimers. Requires Mg(2+) as cofactor. It depends on K(+) as a cofactor.

The protein localises to the cytoplasm. It carries out the reaction L-methionine + ATP + H2O = S-adenosyl-L-methionine + phosphate + diphosphate. The protein operates within amino-acid biosynthesis; S-adenosyl-L-methionine biosynthesis; S-adenosyl-L-methionine from L-methionine: step 1/1. Functionally, catalyzes the formation of S-adenosylmethionine (AdoMet) from methionine and ATP. The overall synthetic reaction is composed of two sequential steps, AdoMet formation and the subsequent tripolyphosphate hydrolysis which occurs prior to release of AdoMet from the enzyme. This is S-adenosylmethionine synthase from Xanthomonas axonopodis pv. citri (strain 306).